Consider the following 104-residue polypeptide: Large ribosomal subunit protein uL24 (104 aa).

Belongs to the universal ribosomal protein uL24 family. Part of the 50S ribosomal subunit.

Its function is as follows. One of two assembly initiator proteins, it binds directly to the 5'-end of the 23S rRNA, where it nucleates assembly of the 50S subunit. In terms of biological role, one of the proteins that surrounds the polypeptide exit tunnel on the outside of the subunit. In Flavobacterium psychrophilum (strain ATCC 49511 / DSM 21280 / CIP 103535 / JIP02/86), this protein is Large ribosomal subunit protein uL24.